Reading from the N-terminus, the 485-residue chain is MKAYELSIEEAAAKLRAGDISSVELTQSCLQRIGDVEDRVKGFITVDEEGALAQAKAADKALQNGETNPLCGIPMSIKDLLAVKDLPMTCGSKMLEKFIAPYNATIVDKLQGAGAVNLGKVTMDEFAMGSTSETCAFGVPQNPWKEGYVAGGSSGGSAVTVAAQECFFSIGTDTGGSIRQPAALCGVVGMKPTYGRVSRYGLTAFASSLDQAGPLCRTVADTALVMNSICGYDPMDSTSINQEVPDYTASLVEGVKGLRIGIPKEYFAKGLDSEVEKVVRNAIAVLASAGAEIVDVSLPHTEYCVAVYYLIAPAEASTNLSRYDGALYGYRDLESKTLEDMYKDTRSAGFGDEVKKRILIGTYALSSGYYDAYYKKASQVRTLIIEDFKNAYRSCDVLLSPVTPTPAWKLGAKSDDPLAIYLSDIMTVSANLAGIPGMSVPGGFTEDGLPVGIQLQGSHFQEEILLKVAYNLEKLLAIQPGKLDF.

Catalysis depends on charge relay system residues Lys78 and Ser153. Ser177 (acyl-ester intermediate) is an active-site residue.

This sequence belongs to the amidase family. GatA subfamily. In terms of assembly, heterotrimer of A, B and C subunits.

The catalysed reaction is L-glutamyl-tRNA(Gln) + L-glutamine + ATP + H2O = L-glutaminyl-tRNA(Gln) + L-glutamate + ADP + phosphate + H(+). Allows the formation of correctly charged Gln-tRNA(Gln) through the transamidation of misacylated Glu-tRNA(Gln) in organisms which lack glutaminyl-tRNA synthetase. The reaction takes place in the presence of glutamine and ATP through an activated gamma-phospho-Glu-tRNA(Gln). In Desulfotalea psychrophila (strain LSv54 / DSM 12343), this protein is Glutamyl-tRNA(Gln) amidotransferase subunit A.